The following is a 306-amino-acid chain: Cysteine synthase (306 aa).

Lysine 46 carries the post-translational modification N6-(pyridoxal phosphate)lysine. Pyridoxal 5'-phosphate contacts are provided by residues asparagine 76, 180–184, and serine 267; that span reads GSGGT.

This sequence belongs to the cysteine synthase/cystathionine beta-synthase family. As to quaternary structure, homodimer. The cofactor is pyridoxal 5'-phosphate.

It catalyses the reaction O-acetyl-L-serine + hydrogen sulfide = L-cysteine + acetate. It participates in amino-acid biosynthesis; L-cysteine biosynthesis; L-cysteine from L-serine: step 2/2. This is Cysteine synthase (cysM) from Helicobacter pylori (strain ATCC 700392 / 26695) (Campylobacter pylori).